Here is a 504-residue protein sequence, read N- to C-terminus: Maturase K (504 aa).

It belongs to the intron maturase 2 family. MatK subfamily.

It localises to the plastid. Its subcellular location is the chloroplast. In terms of biological role, usually encoded in the trnK tRNA gene intron. Probably assists in splicing its own and other chloroplast group II introns. This chain is Maturase K, found in Capsella bursa-pastoris (Shepherd's purse).